The primary structure comprises 355 residues: Epoxyqueuosine reductase (355 aa).

Residue D143 is the Proton donor of the active site. Positions 185–217 constitute a 4Fe-4S ferredoxin-type domain; that stretch reads LPLPIDTPATAHCGTCTRCIDICPTQAIIAPHR. C197, C200, C203, C207, C223, C250, C253, and C257 together coordinate [4Fe-4S] cluster.

It belongs to the QueG family. As to quaternary structure, monomer. It depends on cob(II)alamin as a cofactor. [4Fe-4S] cluster serves as cofactor.

The protein localises to the cytoplasm. It carries out the reaction epoxyqueuosine(34) in tRNA + AH2 = queuosine(34) in tRNA + A + H2O. It functions in the pathway tRNA modification; tRNA-queuosine biosynthesis. Its function is as follows. Catalyzes the conversion of epoxyqueuosine (oQ) to queuosine (Q), which is a hypermodified base found in the wobble positions of tRNA(Asp), tRNA(Asn), tRNA(His) and tRNA(Tyr). The sequence is that of Epoxyqueuosine reductase from Xanthomonas campestris pv. campestris (strain ATCC 33913 / DSM 3586 / NCPPB 528 / LMG 568 / P 25).